Reading from the N-terminus, the 435-residue chain is Salicylate hydroxylase (435 aa).

12 to 41 (RVAIVGGGISGLALALSLCKHSHLNVQLFE) serves as a coordination point for FAD.

FAD serves as cofactor.

It catalyses the reaction salicylate + NADH + O2 + 2 H(+) = catechol + CO2 + NAD(+) + H2O. It functions in the pathway aromatic compound metabolism; naphthalene degradation. The polypeptide is Salicylate hydroxylase (nahG) (Pseudomonas putida (Arthrobacter siderocapsulatus)).